The following is a 183-amino-acid chain: Large ribosomal subunit protein uL6 (183 aa).

This sequence belongs to the universal ribosomal protein uL6 family. In terms of assembly, part of the 50S ribosomal subunit.

Its function is as follows. This protein binds to the 23S rRNA, and is important in its secondary structure. It is located near the subunit interface in the base of the L7/L12 stalk, and near the tRNA binding site of the peptidyltransferase center. The chain is Large ribosomal subunit protein uL6 from Chlamydia muridarum (strain MoPn / Nigg).